A 90-amino-acid chain; its full sequence is Small ribosomal subunit protein uS15c (90 aa).

It belongs to the universal ribosomal protein uS15 family. Part of the 30S ribosomal subunit.

It is found in the plastid. It localises to the chloroplast. This is Small ribosomal subunit protein uS15c (rps15-A) from Pelargonium hortorum (Common geranium).